The chain runs to 165 residues: Pyruvoyl-dependent arginine decarboxylase 1 (165 aa).

Ser45 is modified (pyruvic acid (Ser)).

Belongs to the PdaD family. The cofactor is pyruvate.

It catalyses the reaction L-arginine + H(+) = agmatine + CO2. The chain is Pyruvoyl-dependent arginine decarboxylase 1 (pdaD1) from Methanosarcina acetivorans (strain ATCC 35395 / DSM 2834 / JCM 12185 / C2A).